The following is a 109-amino-acid chain: Transcription initiation factor IIA subunit 2 (109 aa).

Belongs to the TFIIA subunit 2 family. In terms of assembly, TFIIA is a heterodimer of the large unprocessed subunit 1 and a small subunit gamma. It was originally believed to be a heterotrimer of an alpha (p35), a beta (p19) and a gamma subunit (p12). Interacts with NCOA6 general coactivator. TFIIA forms a complex with TBP. Interacts with HSF1 (via transactivation domain). Part of TBP-based Pol II pre-initiation complex (PIC), in which Pol II core assembles with general transcription factors and other specific initiation factors including GTF2E1, GTF2E2, GTF2F1, GTF2F2, TCEA1, ERCC2, ERCC3, GTF2H2, GTF2H3, GTF2H4, GTF2H5, GTF2A1, GTF2A2, GTF2B and TBP; this large multi-subunit PIC complex mediates DNA unwinding and targets Pol II core to the transcription start site where the first phosphodiester bond forms. (Microbial infection) Interacts with SV40 Large T antigen.

The protein localises to the nucleus. Its function is as follows. TFIIA is a component of the transcription machinery of RNA polymerase II and plays an important role in transcriptional activation. TFIIA in a complex with TBP mediates transcriptional activity. This is Transcription initiation factor IIA subunit 2 (GTF2A2) from Homo sapiens (Human).